Consider the following 526-residue polypeptide: Putative NipSnap protein K02D10.1 (526 aa).

It belongs to the NipSnap family.

This chain is Putative NipSnap protein K02D10.1, found in Caenorhabditis elegans.